Consider the following 170-residue polypeptide: Calcineurin subunit B type 1 (170 aa).

EF-hand domains follow at residues 18-46 (DEIR…FMSL), 50-85 (QQNP…FSVR), 87-122 (DKLS…MVGN), and 128-163 (QLQQ…TDIH). Aspartate 31, aspartate 33, serine 35, glutamate 42, aspartate 63, aspartate 65, asparagine 67, glutamate 69, glutamate 74, aspartate 100, aspartate 102, aspartate 104, tyrosine 106, glutamate 111, aspartate 141, aspartate 143, aspartate 145, lysine 147, and glutamate 152 together coordinate Ca(2+).

The protein belongs to the calcineurin regulatory subunit family. In terms of assembly, composed of two components (A and B), the A component is the catalytic subunit and the B component confers calcium sensitivity.

In terms of biological role, calcineurin is a calcium-binding and calmodulin-binding protein found in all cells from yeast to mammals, and a calcium-dependent, calmodulin-stimulated protein phosphatase. In Drosophila melanogaster (Fruit fly), this protein is Calcineurin subunit B type 1 (CanB).